The chain runs to 782 residues: Cysteine-rich protein 2-binding protein (782 aa).

A Phosphoserine modification is found at Ser4. Residues 13-33 (RHDDEATRTSTSEGLEEGEVE) are disordered. At Lys231 the chain carries N6-acetyllysine. Residues 251 to 282 (PVESAMELKEKRSRTQEAKDIRRAQKEAAGFL) are disordered. A compositionally biased stretch (basic and acidic residues) spans 256 to 276 (MELKEKRSRTQEAKDIRRAQK). Ser285 is modified (phosphoserine). Lys292 bears the N6-acetyllysine mark. A compositionally biased stretch (low complexity) spans 315-335 (LSSSDRTPLTSPSPSPSLDFS). 2 disordered regions span residues 315–346 (LSSS…HSAT) and 400–460 (VRKK…EPRY). Composition is skewed to basic and acidic residues over residues 405–426 (RGPE…RMDI) and 446–459 (KPQL…KEPR). At Ser416 the chain carries Phosphoserine. The region spanning 638–782 (LDYCYVRPNH…KHAFFLRLRR (145 aa)) is the N-acetyltransferase domain.

In terms of assembly, interacts with the LIM 1 domain of CSRP2. Component of the ADA2A-containing complex (ATAC), composed of CSRP2BP, KAT2A, TADA2L, TADA3L, ZZ3, MBIP, WDR5, YEATS2, CCDC101 and DR1. In the complex, it probably interacts directly with KAT2A, MBIP and WDR5. Expressed in skeletal muscle, heart, lung, placenta, brain, liver, pancreas and kidney. High expression in skeletal muscle and heart. Lower expression in lung.

It localises to the nucleus. The protein localises to the cytoplasm. Its function is as follows. Component of the ATAC complex, a complex with histone acetyltransferase activity on histones H3 and H4. May function as a scaffold for the ATAC complex to promote ATAC complex stability. Has also weak histone acetyltransferase activity toward histone H4. Required for the normal progression through G1 and G2/M phases of the cell cycle. This Homo sapiens (Human) protein is Cysteine-rich protein 2-binding protein.